The primary structure comprises 604 residues: Glutamine--fructose-6-phosphate aminotransferase [isomerizing] (604 aa).

The Nucleophile; for GATase activity role is filled by Cys2. The region spanning 2–218 (CGIVGVVGNR…DKELVVLTKD (217 aa)) is the Glutamine amidotransferase type-2 domain. 2 SIS domains span residues 284-423 (IVKS…ANGK) and 456-594 (VANL…VDKP). The For Fru-6P isomerization activity role is filled by Lys599.

In terms of assembly, homodimer.

It is found in the cytoplasm. The catalysed reaction is D-fructose 6-phosphate + L-glutamine = D-glucosamine 6-phosphate + L-glutamate. In terms of biological role, catalyzes the first step in hexosamine metabolism, converting fructose-6P into glucosamine-6P using glutamine as a nitrogen source. The polypeptide is Glutamine--fructose-6-phosphate aminotransferase [isomerizing] (Streptococcus mutans serotype c (strain ATCC 700610 / UA159)).